A 172-amino-acid polypeptide reads, in one-letter code: Small ribosomal subunit protein uS5 (172 aa).

One can recognise an S5 DRBM domain in the interval 17–80 (MREKMIAVNR…EECRRNLVKV (64 aa)).

It belongs to the universal ribosomal protein uS5 family. As to quaternary structure, part of the 30S ribosomal subunit. Contacts proteins S4 and S8.

In terms of biological role, with S4 and S12 plays an important role in translational accuracy. Located at the back of the 30S subunit body where it stabilizes the conformation of the head with respect to the body. This is Small ribosomal subunit protein uS5 from Paracidovorax citrulli (strain AAC00-1) (Acidovorax citrulli).